Reading from the N-terminus, the 250-residue chain is AA9 family lytic polysaccharide monooxygenase E (250 aa).

An N-terminal signal peptide occupies residues 1-21 (MAMSKIMSLTGLLASASLVAG). Residues His22 and His107 each coordinate Cu(2+). Cystine bridges form between Cys77–Cys199 and Cys118–Cys122. Asn159 is a glycosylation site (N-linked (GlcNAc...) asparagine). 2 residues coordinate O2: His185 and Gln194. Position 196 (Tyr196) interacts with Cu(2+).

It belongs to the polysaccharide monooxygenase AA9 family. Cu(2+) is required as a cofactor.

Its subcellular location is the secreted. The enzyme catalyses [(1-&gt;4)-beta-D-glucosyl]n+m + reduced acceptor + O2 = 4-dehydro-beta-D-glucosyl-[(1-&gt;4)-beta-D-glucosyl]n-1 + [(1-&gt;4)-beta-D-glucosyl]m + acceptor + H2O.. Functionally, lytic polysaccharide monooxygenase (LPMO) that depolymerizes crystalline and amorphous polysaccharides via the oxidation of scissile alpha- or beta-(1-4)-glycosidic bonds, yielding C1 or C4 oxidation products. Catalysis by LPMOs requires the reduction of the active-site copper from Cu(II) to Cu(I) by a reducing agent and H(2)O(2) or O(2) as a cosubstrate. In Aspergillus tamarii, this protein is AA9 family lytic polysaccharide monooxygenase E.